The primary structure comprises 103 residues: MYAVFQSGGKQHRVAEGHTVRLEKLEVATGATVEFDQVLLIADGETVHVGAPLVAGGKVVAEVVGHGRGEKVTIIKFRRRKHHDKKMGHRQWFTEVKITAINA.

The protein belongs to the bacterial ribosomal protein bL21 family. In terms of assembly, part of the 50S ribosomal subunit. Contacts protein L20.

Its function is as follows. This protein binds to 23S rRNA in the presence of protein L20. The protein is Large ribosomal subunit protein bL21 of Shewanella denitrificans (strain OS217 / ATCC BAA-1090 / DSM 15013).